We begin with the raw amino-acid sequence, 180 residues long: ATP-dependent protease subunit HslV (180 aa).

Thr2 is an active-site residue. Positions 157, 160, and 163 each coordinate Na(+).

The protein belongs to the peptidase T1B family. HslV subfamily. As to quaternary structure, a double ring-shaped homohexamer of HslV is capped on each side by a ring-shaped HslU homohexamer. The assembly of the HslU/HslV complex is dependent on binding of ATP.

The protein resides in the cytoplasm. It catalyses the reaction ATP-dependent cleavage of peptide bonds with broad specificity.. Its activity is regulated as follows. Allosterically activated by HslU binding. Its function is as follows. Protease subunit of a proteasome-like degradation complex believed to be a general protein degrading machinery. The polypeptide is ATP-dependent protease subunit HslV (Tolumonas auensis (strain DSM 9187 / NBRC 110442 / TA 4)).